A 520-amino-acid polypeptide reads, in one-letter code: MRLSNALVLVAACISSVVAKTRTFDFDLVNTRLAPDGFERDTVVINGEFPGTLIQVNKGDSVRIPLHNKLTSPTMRRSVSIHWHGFFQARTSGQDGPSFVNQCPQPPNTTFTYEFSVAEQSGTFWYHSHLSTQYCDGLRGAFIVYDPRDPLRHLYDVDDESTVITLAEWYHILAPDATNEFFSSGIIPVQDSGLINGKGRFNGGPLTPFAVVNVRRGKRYRLRVIAISCRPFFTFSVDNHSLVFMEADGVEHDPVEVQNVDIYAAQRVSVILHANQPIDNYWIRAPMTGGNPDRNPNLNISLTLAILRYHGARHVEPTTVNVPGHKLLDQEMHPIRQEGPGKLGDGPPDKHITLNIAQPNAPFFDINGISYISPTVPVLLQILSGAKRPEDVLPSEQIFFVPKNSLIEVNIPGEGAHPFHLHGHNFDVVLASNDDTFNFKNPPRRDVYPINGGNTTFRFFTDNPGAWFLHCHIDWHLEAGLAIVFAEAPEDNVSGPQSQITPQDWLDLCPEYNAIEPEFQ.

An N-terminal signal peptide occupies residues 1-19 (MRLSNALVLVAACISSVVA). Plastocyanin-like domains are found at residues 21-145 (TRTF…FIVY), 157-305 (VDDE…LTLA), and 375-488 (TVPV…FAEA). Positions 82 and 84 each coordinate Cu cation. Cystine bridges form between C103–C509 and C135–C229. An N-linked (GlcNAc...) asparagine glycan is attached at N108. H127 and H129 together coordinate Cu cation. N-linked (GlcNAc...) asparagine glycosylation is found at N239 and N299. Cu cation contacts are provided by H417, H420, H422, H470, C471, H472, and H476. A glycan (N-linked (GlcNAc...) asparagine) is linked at N492.

It belongs to the multicopper oxidase family. Requires Cu cation as cofactor.

The protein localises to the secreted. It carries out the reaction 4 hydroquinone + O2 = 4 benzosemiquinone + 2 H2O. Its function is as follows. Lignin degradation and detoxification of lignin-derived products. The chain is Laccase-1 (lcc1) from Agaricus bisporus (White button mushroom).